The sequence spans 333 residues: MIDIKLPLTDLHRHLDGNIRPETILDLANQHNIQLPANDLESLLPHVQIIENEPSLVSFLQKLDWGVAVLADLDACRRIAIENVEDAINTGLDYAELRFSPYYMAMNHKLPVEGVVEAIIDGIRSARQNNDIDIRLIGILSRTFGEQACTQELTSLLAHQQHITALDLAGDELGFPGHLFQSHFTKARDAGWHITIHAGEAAGAESIWQAIRELGATRIGHGVKAITDPVLMDYLVENRIGIETCLTSNLQTSTVNSLLDHPLKQFLEKDILASINTDDPAVEGIDIRHEYEIAAPAAGLSIAQIRQAQINGLETAFISDTEKQALRMKAANR.

H12 and H14 together coordinate Zn(2+). 3 residues coordinate substrate: H14, D16, and G170. Position 197 (H197) interacts with Zn(2+). E200 serves as the catalytic Proton donor. D278 contacts Zn(2+). D279 is a binding site for substrate.

Belongs to the metallo-dependent hydrolases superfamily. Adenosine and AMP deaminases family. Adenosine deaminase subfamily. Zn(2+) is required as a cofactor.

The enzyme catalyses adenosine + H2O + H(+) = inosine + NH4(+). It carries out the reaction 2'-deoxyadenosine + H2O + H(+) = 2'-deoxyinosine + NH4(+). Functionally, catalyzes the hydrolytic deamination of adenosine and 2-deoxyadenosine. This Photorhabdus laumondii subsp. laumondii (strain DSM 15139 / CIP 105565 / TT01) (Photorhabdus luminescens subsp. laumondii) protein is Adenosine deaminase.